A 349-amino-acid polypeptide reads, in one-letter code: Two pore potassium channel b (349 aa).

The segment at 1–53 is disordered; it reads MAALDQQPLLHDGGDQKPPPEGAARRFRRCRTAPSSEPPPTDKDNSSAADAPP. Over 1 to 66 the chain is Cytoplasmic; sequence MAALDQQPLL…FTGGGRPSFR (66 aa). Residues 67 to 87 form a helical membrane-spanning segment; sequence LVGLLLVAYLLLGTIAFYLAM. Positions 100–119 form an intramembrane region, pore-forming; the sequence is DALYFCVVTMTTVGYGDLVP. Residues 123 to 143 traverse the membrane as a helical segment; it reads AAKLLACAFVFAGVAVVGTFL. Residues 144 to 180 are Cytoplasmic-facing; that stretch reads SKAADYLVEKQEALLFRALHSHTMVRAMEMNKVRYKL. A helical transmembrane segment spans residues 181 to 201; the sequence is YTAGLLLVAAVASGTVVLWKV. An intramembrane region (pore-forming) is located at residues 208-227; sequence DAFYCVCATVTTLGYGDRSF. Residues 234–254 traverse the membrane as a helical segment; the sequence is AFAVAWITVSTVVVALFFLYA. The Cytoplasmic portion of the chain corresponds to 255 to 349; sequence AELYTERRQR…PTPDPPPSLR (95 aa). EF-hand domains are found at residues 271 to 306 and 310 to 345; these read LRRR…ELGK and EDIS…PDPP. D284, D286, D288, R290, D295, D323, D325, S327, T329, and D334 together coordinate Ca(2+). Residues 326–349 form a disordered region; that stretch reads HSGTLSPADLAAAQPTPDPPPSLR.

The protein belongs to the two pore domain potassium channel (TC 1.A.1.7) family. As to quaternary structure, homodimer.

It localises to the vacuole membrane. Functionally, highly selective inward-rectifying potassium channel that is specifically located in the tonoplast of protein storage vacuoles. Functions independently of the voltage difference across the membrane. In Oryza sativa subsp. japonica (Rice), this protein is Two pore potassium channel b (TPKB).